The chain runs to 956 residues: Glutamyl aminopeptidase (956 aa).

The Cytoplasmic segment spans residues 1 to 21 (MILEERSSWEGSKRYCIKTKH). The helical; Signal-anchor for type II membrane protein transmembrane segment at 22–42 (VAIICAVVVAVGLIVGLSVGL) threads the bilayer. The Extracellular portion of the chain corresponds to 43–956 (TRSCDSTEGM…IRNWFLDLNG (914 aa)). Residues 48–87 (STEGMTQGTTQGTTQAPSHLPPVTSPPEDQGVCPASEDES) form a disordered region. Positions 49–62 (TEGMTQGTTQGTTQ) are enriched in low complexity. Asn126 and Asn199 each carry an N-linked (GlcNAc...) asparagine glycan. A substrate-binding site is contributed by Glu225. Residue Asn326 is glycosylated (N-linked (GlcNAc...) asparagine). Residue 359 to 363 (GAMEN) coordinates substrate. Position 395 (His395) interacts with Zn(2+). Glu396 serves as the catalytic Proton acceptor. 2 residues coordinate Zn(2+): His399 and Glu418. 10 N-linked (GlcNAc...) asparagine glycosylation sites follow: Asn556, Asn569, Asn599, Asn643, Asn647, Asn679, Asn764, Asn797, Asn802, and Asn829. Arg888 contacts substrate.

It belongs to the peptidase M1 family. As to quaternary structure, homodimer; disulfide-linked. Zn(2+) is required as a cofactor.

It localises to the cell membrane. It carries out the reaction Release of N-terminal glutamate (and to a lesser extent aspartate) from a peptide.. Its activity is regulated as follows. Substrate specificity is modulated by calcium which enhances the enzymatic activity for cleavage of acidic residues while reducing its activity with basic residues. Inhibited by aminopeptidase inhibitors amastatin and bestatin. Its function is as follows. Regulates central hypertension through its calcium-modulated preference to cleave N-terminal acidic residues from peptides such as angiotensin II. The chain is Glutamyl aminopeptidase (ENPEP) from Bos taurus (Bovine).